The sequence spans 77 residues: NAD(P)H-quinone oxidoreductase subunit L (77 aa).

The next 2 helical transmembrane spans lie at 12–32 (FVAY…ILFY) and 47–67 (LGVY…SPFL).

This sequence belongs to the complex I NdhL subunit family. NDH-1 can be composed of about 15 different subunits; different subcomplexes with different compositions have been identified which probably have different functions.

It is found in the cellular thylakoid membrane. The catalysed reaction is a plastoquinone + NADH + (n+1) H(+)(in) = a plastoquinol + NAD(+) + n H(+)(out). The enzyme catalyses a plastoquinone + NADPH + (n+1) H(+)(in) = a plastoquinol + NADP(+) + n H(+)(out). NDH-1 shuttles electrons from an unknown electron donor, via FMN and iron-sulfur (Fe-S) centers, to quinones in the respiratory and/or the photosynthetic chain. The immediate electron acceptor for the enzyme in this species is believed to be plastoquinone. Couples the redox reaction to proton translocation, and thus conserves the redox energy in a proton gradient. Cyanobacterial NDH-1 also plays a role in inorganic carbon-concentration. The polypeptide is NAD(P)H-quinone oxidoreductase subunit L (Prochlorococcus marinus (strain MIT 9515)).